Consider the following 239-residue polypeptide: Uridylate kinase (239 aa).

ATP is bound at residue lysine 10 to glycine 13. Positions glycine 18–glycine 23 are involved in allosteric activation by GTP. Glycine 52 contacts UMP. ATP contacts are provided by glycine 53 and arginine 57. Residues aspartate 72 and threonine 133–threonine 140 each bind UMP. Threonine 160, tyrosine 166, and aspartate 169 together coordinate ATP.

Belongs to the UMP kinase family. As to quaternary structure, homohexamer.

The protein resides in the cytoplasm. It carries out the reaction UMP + ATP = UDP + ADP. It participates in pyrimidine metabolism; CTP biosynthesis via de novo pathway; UDP from UMP (UMPK route): step 1/1. With respect to regulation, allosterically activated by GTP. Inhibited by UTP. Functionally, catalyzes the reversible phosphorylation of UMP to UDP. The sequence is that of Uridylate kinase from Chlorobium chlorochromatii (strain CaD3).